Consider the following 276-residue polypeptide: Sulfur carrier protein FdhD (276 aa).

Residue cysteine 120 is the Cysteine persulfide intermediate of the active site.

Belongs to the FdhD family.

It localises to the cytoplasm. Required for formate dehydrogenase (FDH) activity. Acts as a sulfur carrier protein that transfers sulfur from IscS to the molybdenum cofactor prior to its insertion into FDH. The sequence is that of Sulfur carrier protein FdhD from Bordetella parapertussis (strain 12822 / ATCC BAA-587 / NCTC 13253).